The primary structure comprises 915 residues: Protein translocase subunit SecA (915 aa).

Residues Gln87, 105–109 (GEGKT), and Asp512 each bind ATP. The segment at 881–915 (LPGTAPVRPEPKIGRNEPCPCGSGKKYKHCHGQLN) is disordered. Residues Cys899, Cys901, Cys910, and His911 each coordinate Zn(2+). Residues 905–915 (KKYKHCHGQLN) are compositionally biased toward basic residues.

Belongs to the SecA family. Monomer and homodimer. Part of the essential Sec protein translocation apparatus which comprises SecA, SecYEG and auxiliary proteins SecDF-YajC and YidC. It depends on Zn(2+) as a cofactor.

It localises to the cell inner membrane. Its subcellular location is the cytoplasm. It catalyses the reaction ATP + H2O + cellular proteinSide 1 = ADP + phosphate + cellular proteinSide 2.. Its function is as follows. Part of the Sec protein translocase complex. Interacts with the SecYEG preprotein conducting channel. Has a central role in coupling the hydrolysis of ATP to the transfer of proteins into and across the cell membrane, serving both as a receptor for the preprotein-SecB complex and as an ATP-driven molecular motor driving the stepwise translocation of polypeptide chains across the membrane. This chain is Protein translocase subunit SecA, found in Azotobacter vinelandii (strain DJ / ATCC BAA-1303).